The primary structure comprises 307 residues: Protein phosphatase EYA (307 aa).

The tract at residues 1–15 is necessary for optimum phosphatase activity; it reads MNNDTSKKLGTLVSD. D25 acts as the Nucleophile in catalysis. Residues D25, D27, and D253 each coordinate Mg(2+). The Proton donor role is filled by D27.

Belongs to the HAD-like hydrolase superfamily. EYA family. It depends on Mg(2+) as a cofactor.

It carries out the reaction O-phospho-L-tyrosyl-[protein] + H2O = L-tyrosyl-[protein] + phosphate. Its activity is regulated as follows. Inhibited by EDTA. Possesses phosphatase activity toward para-nitrophenyl phosphate (pNPP) in vitro. Possesses phosphatase activity toward several phosphotyrosine-containing peptides in vitro, with low peptide substrate specificity. This Arabidopsis thaliana (Mouse-ear cress) protein is Protein phosphatase EYA.